We begin with the raw amino-acid sequence, 500 residues long: Glutelin type-B 5 (500 aa).

Residues 1 to 24 form the signal peptide; sequence MATIAFSRLSIYFCVLLLCHGSMA. Cystine bridges form between C45–C78 and C121–C310. Cupin type-1 domains follow at residues 50–245 and 316–465; these read LQAF…LVAK and LNIE…EQAR.

It belongs to the 11S seed storage protein (globulins) family. As to quaternary structure, hexamer; each subunit is composed of an acidic and a basic chain derived from a single precursor and linked by a disulfide bond.

In terms of biological role, seed storage protein. This chain is Glutelin type-B 5 (GLUB5), found in Oryza sativa subsp. japonica (Rice).